Here is a 426-residue protein sequence, read N- to C-terminus: Methylamine dehydrogenase heavy chain (426 aa).

Residues 1–31 (MASARESTPRYLTLIGATLACSALALGAAQA) form the signal peptide. The tract at residues 32–64 (QTEPAEPEAPAETAAADAAGQTEGQRGAAEAAA) is disordered. Cysteines 221 and 236 form a disulfide.

It belongs to the aromatic amine dehydrogenase heavy chain family. In terms of assembly, tetramer of two light and two heavy chains.

Its subcellular location is the periplasm. It carries out the reaction 2 oxidized [amicyanin] + methylamine + H2O = 2 reduced [amicyanin] + formaldehyde + NH4(+) + 2 H(+). Its function is as follows. Methylamine dehydrogenase carries out the oxidation of methylamine. Electrons are passed from methylamine dehydrogenase to amicyanin. The protein is Methylamine dehydrogenase heavy chain (mauB) of Paracoccus versutus (Thiobacillus versutus).